Reading from the N-terminus, the 207-residue chain is Guanylate kinase (207 aa).

The Guanylate kinase-like domain maps to 5-184; it reads GNLFIVSAPS…ALADLRAIIR (180 aa). 12–19 is a binding site for ATP; that stretch reads APSGAGKS.

The protein belongs to the guanylate kinase family.

The protein localises to the cytoplasm. The enzyme catalyses GMP + ATP = GDP + ADP. Its function is as follows. Essential for recycling GMP and indirectly, cGMP. This is Guanylate kinase from Shewanella sp. (strain MR-7).